Consider the following 595-residue polypeptide: MRVLLAALGLLFLGALRAFPQDRPFEDTCHGNPSHYYDKAVRRCCYRCPMGLFPTQQCPQRPTDCRKQCEPDYYLDEADRCTACVTCSRDDLVEKTPCAWNSSRVCECRPGMFCSTSAVNSCARCFFHSVCPAGMIVKFPGTAQKNTVCEPASPGVSPACASPENCKEPSSGTIPQAKPTPVSPATSSASTMPVRGGTRLAQEAASKLTRAPDSPSSVGRPSSDPGLSPTQPCPEGSGDCRKQCEPDYYLDEAGRCTACVSCSRDDLVEKTPCAWNSSRTCECRPGMICATSATNSCARCVPYPICAAETVTKPQDMAEKDTTFEAPPLGTQPDCNPTPENGEAPASTSPTQSLLVDSQASKTLPIPTSAPVALSSTGKPVLDAGPVLFWVILVLVVVVGSSAFLLCHRRACRKRIRQKLHLCYPVQTSQPKLELVDSRPRRSSTQLRSGASVTEPVAEERGLMSQPLMETCHSVGAAYLESLPLQDASPAGGPSSPRDLPEPRVSTEHTNNKIEKIYIMKADTVIVGTVKAELPEGRGLAGPAEPELEEELEADHTPHYPEQETEPPLGSCSDVMLSVEEEGKEDPLPTAASGK.

The signal sequence occupies residues 1–18 (MRVLLAALGLLFLGALRA). The Extracellular segment spans residues 19 to 385 (FPQDRPFEDT…STGKPVLDAG (367 aa)). 3 TNFR-Cys repeats span residues 28–66 (TCHGNPSHYYDKAVRRCCYRCPMGLFPTQQCPQRPTDCR), 68–106 (QCEPDYYLDEADRCTACVTCSRDDLVEKTPCAWNSSRVC), and 107–150 (ECRP…TVCE). 8 disulfides stabilise this stretch: Cys-29-Cys-44, Cys-45-Cys-58, Cys-48-Cys-65, Cys-69-Cys-81, Cys-84-Cys-98, Cys-87-Cys-106, Cys-108-Cys-122, and Cys-131-Cys-149. N-linked (GlcNAc...) asparagine glycosylation is present at Asn-32. N-linked (GlcNAc...) asparagine glycosylation is present at Asn-101. The interval 167–238 (KEPSSGTIPQ…PTQPCPEGSG (72 aa)) is disordered. Over residues 179–194 (PTPVSPATSSASTMPV) the composition is skewed to low complexity. TNFR-Cys repeat units lie at residues 205–241 (ASKLTRAPDSPSSVGRPSSDPGLSPTQPCPEGSGDCR), 243–281 (QCEPDYYLDEAGRCTACVSCSRDDLVEKTPCAWNSSRTC), and 282–325 (ECRP…TTFE). 6 cysteine pairs are disulfide-bonded: Cys-233-Cys-240, Cys-244-Cys-256, Cys-259-Cys-273, Cys-262-Cys-281, Cys-283-Cys-297, and Cys-289-Cys-300. A glycan (N-linked (GlcNAc...) asparagine) is linked at Asn-276. The segment at 323–355 (TFEAPPLGTQPDCNPTPENGEAPASTSPTQSLL) is disordered. Asn-336 carries N-linked (GlcNAc...) asparagine glycosylation. Residues 346-355 (ASTSPTQSLL) are compositionally biased toward polar residues. The chain crosses the membrane as a helical span at residues 386-406 (PVLFWVILVLVVVVGSSAFLL). Over 407-595 (CHRRACRKRI…DPLPTAASGK (189 aa)) the chain is Cytoplasmic. Ser-438 and Ser-452 each carry phosphoserine. 3 disordered regions span residues 438–457 (SRPRRSSTQLRSGASVTEPV), 485–509 (LQDASPAGGPSSPRDLPEPRVSTEH), and 536–595 (EGRG…ASGK). Positions 443-452 (SSTQLRSGAS) are enriched in polar residues. The segment covering 499 to 509 (DLPEPRVSTEH) has biased composition (basic and acidic residues).

The protein belongs to the TNFR8 family. In terms of assembly, interacts with TRAF1, TRAF2, TRAF3 and TRAF5. Phosphorylated on serine and tyrosine residues. Isoform 2 is constitutively phosphorylated. As to expression, detected in alveolar macrophages (at protein level).

It is found in the cell membrane. It localises to the cytoplasm. Its function is as follows. Receptor for TNFSF8/CD30L. May play a role in the regulation of cellular growth and transformation of activated lymphoblasts. Regulates gene expression through activation of NF-kappa-B. This Homo sapiens (Human) protein is Tumor necrosis factor receptor superfamily member 8.